The following is a 77-amino-acid chain: uncharacterized protein (77 aa).

Transmembrane regions (helical) follow at residues 3–23 (FNFI…SFLF) and 35–55 (IGAI…VALL).

It localises to the cell membrane. This is an uncharacterized protein from Haemophilus influenzae (strain ATCC 51907 / DSM 11121 / KW20 / Rd).